Reading from the N-terminus, the 293-residue chain is Protein nud-2 (293 aa).

A coiled-coil region spans residues 36–147; the sequence is EIEKMMDSEL…EKIAMLESEL (112 aa). The interval 239–293 is required for interaction with unc-83 isoform c; it reads KSQRVSTGTGAGACINRIVKDLMTKVERLDSILSTIRVSNNSSNNNSSHLTTTRA.

The protein belongs to the nudE family. Component of a dynein-regulating complex composed of at least lis-1 and nud-2. Interacts with lis-1; the interaction is direct. Interacts (via C-terminus) with unc-83; the interaction is direct, and is required for recruitment of nud-2 to the nuclear envelope. As to expression, expressed in ventral cord neurons, the pharynx, seam cells of the hypodermis and in vulval muscle cells.

It is found in the nucleus envelope. Functionally, part of a complex with lis-1, which is recruited to the nuclear envelope by unc-83, where, in turn, it recruits dynein to the nuclear surface and regulates nuclear migration in hypodermal precursor cells. Plays a role in GABAergic synaptic vesicle localization in the ventral nerve cord. The polypeptide is Protein nud-2 (Caenorhabditis elegans).